We begin with the raw amino-acid sequence, 1674 residues long: MSSRRKRAPPMKVDEERQQQLHWNMHEDLRSEPLTMTVGEQACSDADSSSDCIIIDEGPPESALHRDKKRRSETVSVLEATEEETRLSVTLNVTVSPYRVDNSWKAFLGDFALQLLPKESLVEHFSERTFTLSPSESSSQFLIYVHSECKNVEKQENVLEGSAGVCSKGIRVESSFSSDMLQDLAWLQKRRGIKLYQRPDGTHTIKVGIYILEAGLTRLDFMSDAGSRMKKFNQLMKRVMEKLHNFIIPDVLEEEEEGSESEPEGQDIDELYHFVKQTHQQETRSVQVDVQHPALIPVLRPYQREAVNWMLQQEQFRSAPPADNSLHFLWREIVTPDGLKLYYNPYTGCIIRDFPHAGPQLLGGILADEMGLGKTVEVLALILTHTRQDVKQDALTLPEGKVVNYFIPTHCPREKVKNREIQDTEYEPKEKVHCPPTRVMILTAVKEMNGKKGVSILSIYKYVSSIFRYDVQRNRGLLKRMLKCLIFEGLVKQIKGHGFSGTFTLGKNYKEDVFDKTKKQAVGSPRKIEKELRKSVNKDADSEYLPSNTSDDDEPYYYYCKAGKSRSKLKKPALLTKKGKGQSVHLDSQGDAPAAGVCASTDVHVSENTCVSEDKQTQEAKDCAESPNPAAEELAQSNTSSPCETSDYRFECICGEFDQIGHKPRVQCLKCHLWQHAKCVNYEEKNLKVKPFYCPHCLVAMEPVSTRATLIISPSSICHQWVDEINRHVRSSSLRVLVYQGVKKHGFLQPHFLAEQDIVIITYDVLRSELNYVNIPHSNSEDGRRLRNQKRYMAIPSPLVAVEWWRICLDEAQMVECPTVKAAEMAQRLSGINRWCISGTPVQRGLEDLFGLVVFLGIEPYCVKHWWIRLLYHPYCKKNPQHLYSFIAKIMWRSAKKDVIDQIQIPPQTEEMHWLHFSPVERHFYHRQHEVCCQDAIVKLRKISDWALKLSSLDRRTVSSILYPLLRLRQACCHPQAVRGEFLPLQKSTMTMEELLTSLQKKCGTECEEAHRQLVCALNGLAGIHIIKGEYALAAELYREVLRSSEEHKGKLKTDSLQRLHATHNLMELLGAKHPGIPPTLRDGRLEEEAKQLREHYMSKCNTEVAEAQQALQPVQQSIRELQRKIHSNSPWWLNVIHRAMEFSVDEELVQRVRNEISSNYKQQTDKLSMSEKFRDCRGLQFLLTTQMEELHKFQKLVREAVKKLEKPPSREVIESATVCHLRPARLPLNCCVFCKADELFTEYESKLFFNTVKGQTAIFEEMIEDEEGLVDDRVPTTTRGLWAVSETERSMKAILSFARSHRFDVEYVDEGSVSMDLFEAWKKEYKLLHEYWMTLRNRVSAVDELAMATERLRVRHPKEPKPNPPVHHIIEPHEVEQNRIKLVNDKAVATSQLQKKLGQLLYLTNLEKSQDKTSGGINPEPCPICARQLGKQWAVLTCGHCFCNECTSIIIEQYSVGSHRSSIKCAICRQTTSHKEVSYVFTSEKANQEDDIPVKGSHSTKVEAVVRTLMKIQLRDPGAKALVFSTWQDVLDIISKALTDNNMEFTQISRIKTFQENLSAFKYDPHINILLLPLHTGSNGLTIIEATHVLLVEPILNPAHELQAIGRVHRIGQTKPTIVHRFLIKATIEERMQAMLKTAERSHTSSSGKHSEASVLTVAGLADLFTKENEELE.

Residues 1–26 (MSSRRKRAPPMKVDEERQQQLHWNMH) are disordered. The segment covering 12-26 (KVDEERQQQLHWNMH) has biased composition (basic and acidic residues). Residues Ser-259 and Ser-261 each carry the phosphoserine modification. Positions 302–384 (YQREAVNWML…TVEVLALILT (83 aa)) constitute a Helicase ATP-binding; first part domain. 368 to 375 (DEMGLGKT) is a binding site for ATP. One can recognise an H15 domain in the interval 433 to 507 (HCPPTRVMIL…GFSGTFTLGK (75 aa)). The tract at residues 524 to 548 (SPRKIEKELRKSVNKDADSEYLPSN) is disordered. The segment covering 526–541 (RKIEKELRKSVNKDAD) has biased composition (basic and acidic residues). A Phosphoserine modification is found at Ser-626. The PHD-type zinc-finger motif lies at 649-700 (RFECICGEFDQIGHKPRVQCLKCHLWQHAKCVNYEEKNLKVKPFYCPHCLVA). Residues 701 to 859 (MEPVSTRATL…FGLVVFLGIE (159 aa)) form the Helicase ATP-binding; second part domain. Positions 810–813 (DEAQ) match the DEAQ box motif. Residues 1423 to 1470 (CPICARQLGKQWAVLTCGHCFCNECTSIIIEQYSVGSHRSSIKCAICR) form an RING-type zinc finger. Residues 1505–1663 (AVVRTLMKIQ…ASVLTVAGLA (159 aa)) form the Helicase C-terminal domain.

Belongs to the SNF2/RAD54 helicase family. As to quaternary structure, homodimer. Interacts with HLTF, PCNA, UBE2N and RAD18. In terms of tissue distribution, broadly expressed (at protein level).

It catalyses the reaction S-ubiquitinyl-[E2 ubiquitin-conjugating enzyme]-L-cysteine + [acceptor protein]-L-lysine = [E2 ubiquitin-conjugating enzyme]-L-cysteine + N(6)-ubiquitinyl-[acceptor protein]-L-lysine.. It functions in the pathway protein modification; protein ubiquitination. In terms of biological role, E3 ubiquitin-protein ligase involved in DNA repair. Upon genotoxic stress, accepts ubiquitin from the UBE2N-UBE2V2 E2 complex and transfers it to 'Lys-164' of PCNA which had been monoubiquitinated by UBE2A/B-RAD18, promoting the formation of non-canonical poly-ubiquitin chains linked through 'Lys-63'. This Mus musculus (Mouse) protein is E3 ubiquitin-protein ligase SHPRH (Shprh).